Reading from the N-terminus, the 340-residue chain is Uroporphyrinogen decarboxylase (340 aa).

Residues 21 to 25 (RQAGR), Asp71, Tyr148, Ser203, and His316 contribute to the substrate site.

This sequence belongs to the uroporphyrinogen decarboxylase family. As to quaternary structure, homodimer.

It localises to the cytoplasm. The enzyme catalyses uroporphyrinogen III + 4 H(+) = coproporphyrinogen III + 4 CO2. It functions in the pathway porphyrin-containing compound metabolism; protoporphyrin-IX biosynthesis; coproporphyrinogen-III from 5-aminolevulinate: step 4/4. Catalyzes the decarboxylation of four acetate groups of uroporphyrinogen-III to yield coproporphyrinogen-III. This Campylobacter jejuni subsp. jejuni serotype O:23/36 (strain 81-176) protein is Uroporphyrinogen decarboxylase.